Here is a 168-residue protein sequence, read N- to C-terminus: Photosystem I assembly protein Ycf3 (168 aa).

TPR repeat units lie at residues 35 to 68 (AFTYYRDGMSAQSEGNYAEALQNYYEAMRLEIDP), 72 to 105 (SYILYNIGLIHTSNGEHTKALEYYFRALERNPFL), and 120 to 153 (GEQAIRQGDSEIAEAWFDQAAEYWKQAIALTPGN).

Belongs to the Ycf3 family.

The protein localises to the plastid. It localises to the chloroplast thylakoid membrane. Functionally, essential for the assembly of the photosystem I (PSI) complex. May act as a chaperone-like factor to guide the assembly of the PSI subunits. The chain is Photosystem I assembly protein Ycf3 from Lactuca sativa (Garden lettuce).